The chain runs to 601 residues: UvrABC system protein C (601 aa).

In terms of domain architecture, GIY-YIG spans 17-95 (TLPGVYRMLD…IKALAPRYNI (79 aa)). In terms of domain architecture, UVR spans 204–239 (SELINELTRRMTAAAEAMAFEQAAELRDQIQALARV).

This sequence belongs to the UvrC family. As to quaternary structure, interacts with UvrB in an incision complex.

It is found in the cytoplasm. In terms of biological role, the UvrABC repair system catalyzes the recognition and processing of DNA lesions. UvrC both incises the 5' and 3' sides of the lesion. The N-terminal half is responsible for the 3' incision and the C-terminal half is responsible for the 5' incision. The polypeptide is UvrABC system protein C (Chromobacterium violaceum (strain ATCC 12472 / DSM 30191 / JCM 1249 / CCUG 213 / NBRC 12614 / NCIMB 9131 / NCTC 9757 / MK)).